A 220-amino-acid polypeptide reads, in one-letter code: Deoxyribose-phosphate aldolase (220 aa).

Catalysis depends on Asp-89, which acts as the Proton donor/acceptor. Lys-151 functions as the Schiff-base intermediate with acetaldehyde in the catalytic mechanism. The active-site Proton donor/acceptor is Lys-180.

Belongs to the DeoC/FbaB aldolase family. DeoC type 1 subfamily.

The protein localises to the cytoplasm. It carries out the reaction 2-deoxy-D-ribose 5-phosphate = D-glyceraldehyde 3-phosphate + acetaldehyde. Its pathway is carbohydrate degradation; 2-deoxy-D-ribose 1-phosphate degradation; D-glyceraldehyde 3-phosphate and acetaldehyde from 2-deoxy-alpha-D-ribose 1-phosphate: step 2/2. Catalyzes a reversible aldol reaction between acetaldehyde and D-glyceraldehyde 3-phosphate to generate 2-deoxy-D-ribose 5-phosphate. The protein is Deoxyribose-phosphate aldolase of Streptococcus pneumoniae serotype 4 (strain ATCC BAA-334 / TIGR4).